We begin with the raw amino-acid sequence, 491 residues long: Ketol-acid reductoisomerase (NADP(+)) (491 aa).

One can recognise a KARI N-terminal Rossmann domain in the interval Ala-15 to Ser-208. NADP(+) contacts are provided by residues Cys-45–Gln-48, Arg-68, Arg-76, Ser-78, and Asp-108–Gln-110. The active site involves His-132. Gly-158 is a binding site for NADP(+). KARI C-terminal knotted domains follow at residues Ser-209–Gln-344 and Tyr-345–Met-484. The Mg(2+) site is built by Asp-217, Glu-221, Glu-389, and Glu-393. Ser-414 serves as a coordination point for substrate.

This sequence belongs to the ketol-acid reductoisomerase family. Requires Mg(2+) as cofactor.

It catalyses the reaction (2R)-2,3-dihydroxy-3-methylbutanoate + NADP(+) = (2S)-2-acetolactate + NADPH + H(+). The catalysed reaction is (2R,3R)-2,3-dihydroxy-3-methylpentanoate + NADP(+) = (S)-2-ethyl-2-hydroxy-3-oxobutanoate + NADPH + H(+). Its pathway is amino-acid biosynthesis; L-isoleucine biosynthesis; L-isoleucine from 2-oxobutanoate: step 2/4. It participates in amino-acid biosynthesis; L-valine biosynthesis; L-valine from pyruvate: step 2/4. Functionally, involved in the biosynthesis of branched-chain amino acids (BCAA). Catalyzes an alkyl-migration followed by a ketol-acid reduction of (S)-2-acetolactate (S2AL) to yield (R)-2,3-dihydroxy-isovalerate. In the isomerase reaction, S2AL is rearranged via a Mg-dependent methyl migration to produce 3-hydroxy-3-methyl-2-ketobutyrate (HMKB). In the reductase reaction, this 2-ketoacid undergoes a metal-dependent reduction by NADPH to yield (R)-2,3-dihydroxy-isovalerate. The sequence is that of Ketol-acid reductoisomerase (NADP(+)) from Escherichia coli O6:K15:H31 (strain 536 / UPEC).